The primary structure comprises 290 residues: Elongation factor Ts (290 aa).

The segment at 87–90 (TDFV) is involved in Mg(2+) ion dislocation from EF-Tu.

Belongs to the EF-Ts family.

Its subcellular location is the cytoplasm. Associates with the EF-Tu.GDP complex and induces the exchange of GDP to GTP. It remains bound to the aminoacyl-tRNA.EF-Tu.GTP complex up to the GTP hydrolysis stage on the ribosome. The polypeptide is Elongation factor Ts (tsf) (Treponema pallidum (strain Nichols)).